Consider the following 77-residue polypeptide: ATP synthase subunit c (77 aa).

2 helical membrane-spanning segments follow: residues 13–33 (IATV…GIVA) and 55–75 (FLGI…YFIF).

Belongs to the ATPase C chain family. F-type ATPases have 2 components, F(1) - the catalytic core - and F(0) - the membrane proton channel. F(1) has five subunits: alpha(3), beta(3), gamma(1), delta(1), epsilon(1). F(0) has three main subunits: a(1), b(2) and c(10-14). The alpha and beta chains form an alternating ring which encloses part of the gamma chain. F(1) is attached to F(0) by a central stalk formed by the gamma and epsilon chains, while a peripheral stalk is formed by the delta and b chains.

The protein localises to the cell membrane. Functionally, f(1)F(0) ATP synthase produces ATP from ADP in the presence of a proton or sodium gradient. F-type ATPases consist of two structural domains, F(1) containing the extramembraneous catalytic core and F(0) containing the membrane proton channel, linked together by a central stalk and a peripheral stalk. During catalysis, ATP synthesis in the catalytic domain of F(1) is coupled via a rotary mechanism of the central stalk subunits to proton translocation. In terms of biological role, key component of the F(0) channel; it plays a direct role in translocation across the membrane. A homomeric c-ring of between 10-14 subunits forms the central stalk rotor element with the F(1) delta and epsilon subunits. This chain is ATP synthase subunit c, found in Clavibacter sepedonicus (Clavibacter michiganensis subsp. sepedonicus).